Here is a 343-residue protein sequence, read N- to C-terminus: Lipase chaperone (343 aa).

The helical transmembrane segment at 7–27 (IYLGIGLVALLMIFIYWLMPK) threads the bilayer.

The protein belongs to the lipase chaperone family.

Its subcellular location is the cell inner membrane. Its function is as follows. May be involved in the folding of the extracellular lipase during its passage through the periplasm. This chain is Lipase chaperone (lifO), found in Acinetobacter baylyi (strain ATCC 33305 / BD413 / ADP1).